We begin with the raw amino-acid sequence, 434 residues long: Serine--tRNA ligase (434 aa).

239 to 241 (TAE) contributes to the L-serine binding site. 270–272 (RSE) provides a ligand contact to ATP. Residue Glu-293 participates in L-serine binding. Residue 357–360 (EISS) participates in ATP binding. Position 392 (Ser-392) interacts with L-serine.

It belongs to the class-II aminoacyl-tRNA synthetase family. Type-1 seryl-tRNA synthetase subfamily. Homodimer. The tRNA molecule binds across the dimer.

The protein resides in the cytoplasm. It catalyses the reaction tRNA(Ser) + L-serine + ATP = L-seryl-tRNA(Ser) + AMP + diphosphate + H(+). The enzyme catalyses tRNA(Sec) + L-serine + ATP = L-seryl-tRNA(Sec) + AMP + diphosphate + H(+). The protein operates within aminoacyl-tRNA biosynthesis; selenocysteinyl-tRNA(Sec) biosynthesis; L-seryl-tRNA(Sec) from L-serine and tRNA(Sec): step 1/1. In terms of biological role, catalyzes the attachment of serine to tRNA(Ser). Is also able to aminoacylate tRNA(Sec) with serine, to form the misacylated tRNA L-seryl-tRNA(Sec), which will be further converted into selenocysteinyl-tRNA(Sec). The chain is Serine--tRNA ligase from Cupriavidus necator (strain ATCC 17699 / DSM 428 / KCTC 22496 / NCIMB 10442 / H16 / Stanier 337) (Ralstonia eutropha).